Consider the following 316-residue polypeptide: Protoheme IX farnesyltransferase (316 aa).

9 consecutive transmembrane segments (helical) span residues 32–52 (VMSLVIFTALTGVLIAPTHVN), 53–73 (PIIGFASLLAIAAGAGASGAL), 98–118 (VARESALAFGMVLALLSVITL), 120–140 (FVANWAAAALLAFTIFFYVVI), 153–173 (IVIGGAAGAFPPIVAYLAVAG), 180–200 (LALFAIIFVWTPPHFWALALV), 226–246 (ILLYTLLLAPIGMTPYFIGFA), 251–271 (GLLSFGLGGVMILHAVRVYLA), and 280–300 (VAMRMFGFSILYLFLLFAAIV).

Belongs to the UbiA prenyltransferase family. Protoheme IX farnesyltransferase subfamily.

Its subcellular location is the cell inner membrane. It catalyses the reaction heme b + (2E,6E)-farnesyl diphosphate + H2O = Fe(II)-heme o + diphosphate. The protein operates within porphyrin-containing compound metabolism; heme O biosynthesis; heme O from protoheme: step 1/1. Functionally, converts heme B (protoheme IX) to heme O by substitution of the vinyl group on carbon 2 of heme B porphyrin ring with a hydroxyethyl farnesyl side group. The polypeptide is Protoheme IX farnesyltransferase (Methylocella silvestris (strain DSM 15510 / CIP 108128 / LMG 27833 / NCIMB 13906 / BL2)).